The primary structure comprises 141 residues: Cystatin (141 aa).

Residues 1-26 form the signal peptide; it reads MVRSQLPVAAPLRLLCALLLLPSATM. Positions 29–129 constitute a Cystatin domain; the sequence is GGLSPRSVTD…CHFQVWSRPW (101 aa). A Secondary area of contact motif is present at residues 73–77; sequence QVVSG. 2 cysteine pairs are disulfide-bonded: cysteine 91–cysteine 107 and cysteine 120–cysteine 140.

The protein belongs to the cystatin family. As to expression, expressed at a low level by the venom gland (at protein level).

The protein resides in the secreted. Functionally, inhibits various C1 cysteine proteases including cathepsin L, papain and cathepsin B. This protein has no toxic activity and its function in the venom is unknown. It may play a role as a housekeeping or regulatory protein. The sequence is that of Cystatin from Micropechis ikaheca (New Guinean small-eyed snake).